Consider the following 395-residue polypeptide: N5-carboxyaminoimidazole ribonucleotide synthase (395 aa).

Residues Lys-109, Lys-149, 184–187 (EEFI), Glu-192, and 268–269 (NE) contribute to the ATP site. The 186-residue stretch at 113–298 (RQLLTRLGLP…QFEQQLRAIA (186 aa)) folds into the ATP-grasp domain.

Belongs to the PurK/PurT family. Homodimer.

It catalyses the reaction 5-amino-1-(5-phospho-beta-D-ribosyl)imidazole + hydrogencarbonate + ATP = 5-carboxyamino-1-(5-phospho-D-ribosyl)imidazole + ADP + phosphate + 2 H(+). Its pathway is purine metabolism; IMP biosynthesis via de novo pathway; 5-amino-1-(5-phospho-D-ribosyl)imidazole-4-carboxylate from 5-amino-1-(5-phospho-D-ribosyl)imidazole (N5-CAIR route): step 1/2. Catalyzes the ATP-dependent conversion of 5-aminoimidazole ribonucleotide (AIR) and HCO(3)(-) to N5-carboxyaminoimidazole ribonucleotide (N5-CAIR). The protein is N5-carboxyaminoimidazole ribonucleotide synthase of Synechococcus elongatus (strain ATCC 33912 / PCC 7942 / FACHB-805) (Anacystis nidulans R2).